We begin with the raw amino-acid sequence, 284 residues long: Formamidopyrimidine-DNA glycosylase (284 aa).

Proline 2 functions as the Schiff-base intermediate with DNA in the catalytic mechanism. Glutamate 3 acts as the Proton donor in catalysis. Lysine 58 functions as the Proton donor; for beta-elimination activity in the catalytic mechanism. 3 residues coordinate DNA: histidine 97, arginine 120, and arginine 165. The FPG-type zinc-finger motif lies at 250–284; the sequence is FVYDRAGEPCKVCGTPVRQIVQGQRSTFYCTHCQH. Residue arginine 274 is the Proton donor; for delta-elimination activity of the active site.

This sequence belongs to the FPG family. In terms of assembly, monomer. Zn(2+) serves as cofactor.

The enzyme catalyses Hydrolysis of DNA containing ring-opened 7-methylguanine residues, releasing 2,6-diamino-4-hydroxy-5-(N-methyl)formamidopyrimidine.. It carries out the reaction 2'-deoxyribonucleotide-(2'-deoxyribose 5'-phosphate)-2'-deoxyribonucleotide-DNA = a 3'-end 2'-deoxyribonucleotide-(2,3-dehydro-2,3-deoxyribose 5'-phosphate)-DNA + a 5'-end 5'-phospho-2'-deoxyribonucleoside-DNA + H(+). Functionally, involved in base excision repair of DNA damaged by oxidation or by mutagenic agents. Acts as a DNA glycosylase that recognizes and removes damaged bases. Has a preference for oxidized purines, such as 7,8-dihydro-8-oxoguanine (8-oxoG). Has AP (apurinic/apyrimidinic) lyase activity and introduces nicks in the DNA strand. Cleaves the DNA backbone by beta-delta elimination to generate a single-strand break at the site of the removed base with both 3'- and 5'-phosphates. The polypeptide is Formamidopyrimidine-DNA glycosylase (Cupriavidus pinatubonensis (strain JMP 134 / LMG 1197) (Cupriavidus necator (strain JMP 134))).